Consider the following 351-residue polypeptide: MNLNEFQQKYAYRKEINYDGQIDLLARVVMEQKERYILQTINGFKPAVVKGKMRHEAISREDYPAVGDWVVLQEKDFNDIVIIDQVLPRFSSIVRKVAGLRTDAQIVASNVTKVFIVISADEDLNERKLERYLTAVWESGASPHIVFSKVDLASDMDSIIEHADSIAFGIPLYKWNATNEEGKEDILANIHEDDSVVLIGSSGAGKSTLINALLTEKVLKTGSVREDDKRGRHTTTHRELFNLPTGGVIIDTPGMRELQLWTEDGDTLSHTFSDINHLIAECKFTDCKHDTEPDCAVKEALETGDLEEGRWNSYLKLQRELAYIERKQNAKLATEERKKWKKISMQQKKNR.

Residues 100 to 258 (LRTDAQIVAS…IIDTPGMREL (159 aa)) form the CP-type G domain. GTP is bound by residues 148 to 151 (SKVD) and 200 to 208 (GSSGAGKST). Residues C282, C287, H289, and C295 each contribute to the Zn(2+) site.

Belongs to the TRAFAC class YlqF/YawG GTPase family. RsgA subfamily. As to quaternary structure, monomer. Associates with 30S ribosomal subunit, binds 16S rRNA. Requires Zn(2+) as cofactor.

Its subcellular location is the cytoplasm. In terms of biological role, one of several proteins that assist in the late maturation steps of the functional core of the 30S ribosomal subunit. Helps release RbfA from mature subunits. May play a role in the assembly of ribosomal proteins into the subunit. Circularly permuted GTPase that catalyzes slow GTP hydrolysis, GTPase activity is stimulated by the 30S ribosomal subunit. This is Small ribosomal subunit biogenesis GTPase RsgA 1 from Oceanobacillus iheyensis (strain DSM 14371 / CIP 107618 / JCM 11309 / KCTC 3954 / HTE831).